The primary structure comprises 75 residues: Translational regulator CsrA (75 aa).

It belongs to the CsrA/RsmA family. In terms of assembly, homodimer; the beta-strands of each monomer intercalate to form a hydrophobic core, while the alpha-helices form wings that extend away from the core.

The protein localises to the cytoplasm. Functionally, a translational regulator that binds mRNA to regulate translation initiation and/or mRNA stability. Usually binds in the 5'-UTR at or near the Shine-Dalgarno sequence preventing ribosome-binding, thus repressing translation. Its main target seems to be the major flagellin gene, while its function is anatagonized by FliW. In Treponema denticola (strain ATCC 35405 / DSM 14222 / CIP 103919 / JCM 8153 / KCTC 15104), this protein is Translational regulator CsrA.